Reading from the N-terminus, the 264-residue chain is Hemin import ATP-binding protein HmuV (264 aa).

The ABC transporter domain occupies 2-242 (IEAVNICVQR…QNLSDAYHCS (241 aa)). 34–41 (GPNGSGKS) serves as a coordination point for ATP.

This sequence belongs to the ABC transporter superfamily. Heme (hemin) importer (TC 3.A.1.14.5) family. In terms of assembly, the complex is composed of two ATP-binding proteins (HmuV), two transmembrane proteins (HmuU) and a solute-binding protein (HmuT).

It localises to the cell inner membrane. Part of the ABC transporter complex HmuTUV involved in hemin import. Responsible for energy coupling to the transport system. The protein is Hemin import ATP-binding protein HmuV of Bartonella quintana (strain Toulouse) (Rochalimaea quintana).